We begin with the raw amino-acid sequence, 200 residues long: Protein DMP7 (200 aa).

Transmembrane regions (helical) follow at residues 37-57 (LSNLLPTGSVMSFQIMCPVLT), 69-89 (WLTCFLVSLCAISCFLFSFTD), 129-149 (ILDFIHAIMSMLVFFAVSMFD), and 167-187 (ILTSLPFVIGVICGAFFLAFP).

The protein belongs to the plant DMP1 protein family. Expressed in leaves, stems, flowers, siliques and roots, especially in the vasculature.

Its subcellular location is the endoplasmic reticulum membrane. Involved in membrane remodeling. The protein is Protein DMP7 of Arabidopsis thaliana (Mouse-ear cress).